We begin with the raw amino-acid sequence, 509 residues long: Group 3 secretory phospholipase A2 (509 aa).

The N-terminal stretch at 1-19 (MGVQAGLFGMLGFLGVALG) is a signal peptide. The tract at residues 123–149 (ESPAGARKKRAAGQSGVPGGGHQREKR) is disordered. The tract at residues 150–291 (GWTMPGTLWC…SWSSRATSPT (142 aa)) is phospholipase A2-like. Ca(2+) is bound by residues Trp158, Gly160, and Gly162. 4 disulfides stabilise this stretch: Cys159-Cys181, Cys180-Cys220, Cys187-Cys213, and Cys211-Cys244. N-linked (GlcNAc...) asparagine glycosylation is present at Asn167. Residue His184 is part of the active site. Residue Asp185 coordinates Ca(2+). Asp214 is an active-site residue. Residue Asn280 is glycosylated (N-linked (GlcNAc...) asparagine). Residues 283–354 (WSSRATSPTP…LQGPQGGLKP (72 aa)) form a disordered region. The span at 284–296 (SSRATSPTPSSRS) shows a compositional bias: low complexity. The span at 302 to 322 (PRQKQHLRKGPPHQKGSKRPS) shows a compositional bias: basic residues. 3 N-linked (GlcNAc...) asparagine glycosylation sites follow: Asn325, Asn396, and Asn439. The segment at 458–482 (QQRRHQLQDKGTDERQPWPSEPLRG) is disordered. The span at 463–473 (QLQDKGTDERQ) shows a compositional bias: basic and acidic residues.

This sequence belongs to the phospholipase A2 family. Ca(2+) is required as a cofactor. In terms of processing, N-glycosylation does not affect the catalytic activity, but is required for proper secretion. A nonglycosylated form is observed in several cell types. Post-translationally, in several cell types, the N- and C-termini are cleaved off. Expressed in kidney, heart, liver, and skeletal muscle. Also present in placenta and peripheral blood leukocytes. Not detected in colon, thymus, spleen and small intestine. In lung, expressed in bronchial epithelial cells and alveolar macrophages, but scarcely detected in alveolar epithelium, arterial walls and interstitial fibroblasts (at protein level). In joints of osteoarthritis and rheumatoid arthritis, expressed in endothelial cells (at protein level). In normal heart, detected in some vessels. In myocardial tissues with acute infarction, expressed in vascular endothelial cells adjacent to cardiomyocytes and those in lesions with granulation. Expression in cardiomyocytes is scarce (at protein level). In uterus, breast and colon cancers, detected in tumor cells and neighboring microvascular endothelium, but not in normal glandular tissues (at protein level). Expressed in dermal resting mast cells (at protein level) and pulmonary mast cells. Expressed in neuronal fibers (at protein level). Highly expressed in dorsal root ganglia neurons (at protein level). Expressed in Purkinje cells in cerebellum (at protein level). In stomach is preferentially expressed in neuronal fibers and in microvascular endothelium. Sparsely expressed in normal aorta (at protein level). Highly expressed in macrophages and smooth muscle cells in aorta with atheroma.

It is found in the secreted. The protein localises to the cell membrane. Its subcellular location is the cytoplasm. It localises to the cytoskeleton. The protein resides in the microtubule organizing center. It is found in the centrosome. The protein localises to the centriole. Its subcellular location is the recycling endosome. It carries out the reaction a 1,2-diacyl-sn-glycero-3-phosphocholine + H2O = a 1-acyl-sn-glycero-3-phosphocholine + a fatty acid + H(+). It catalyses the reaction 1-hexadecanoyl-2-(9Z,12Z-octadecadienoyl)-sn-glycero-3-phosphocholine + H2O = (9Z,12Z)-octadecadienoate + 1-hexadecanoyl-sn-glycero-3-phosphocholine + H(+). The catalysed reaction is 1-hexadecanoyl-2-(5Z,8Z,11Z,14Z-eicosatetraenoyl)-sn-glycero-3-phosphocholine + H2O = 1-hexadecanoyl-sn-glycero-3-phosphocholine + (5Z,8Z,11Z,14Z)-eicosatetraenoate + H(+). The enzyme catalyses 1-hexadecanoyl-2-(9Z,12Z-octadecadienoyl)-sn-glycero-3-phosphoethanolamine + H2O = 1-hexadecanoyl-sn-glycero-3-phosphoethanolamine + (9Z,12Z)-octadecadienoate + H(+). It carries out the reaction 1-hexadecanoyl-2-(5Z,8Z,11Z,14Z-eicosatetraenoyl)-sn-glycero-3-phosphoethanolamine + H2O = 1-hexadecanoyl-sn-glycero-3-phosphoethanolamine + (5Z,8Z,11Z,14Z)-eicosatetraenoate + H(+). Its activity is regulated as follows. Arachidonic acid release is markedly increased by glypican, a glycosylphosphatidylinositol-anchored heparan sulfate proteoglycan. Its function is as follows. Secretory calcium-dependent phospholipase A2 that primarily targets extracellular phospholipids. Hydrolyzes the ester bond of the fatty acyl group attached at sn-2 position of phospholipids without apparent head group selectivity. Contributes to phospholipid remodeling of low-density lipoprotein (LDL) and high-density lipoprotein (HDL) particles. Hydrolyzes LDL phospholipids releasing unsaturated fatty acids that regulate macrophage differentiation toward foam cells. May act in an autocrine and paracrine manner. Secreted by immature mast cells, acts on nearby fibroblasts upstream to PTDGS to synthesize prostaglandin D2 (PGD2), which in turn promotes mast cell maturation and degranulation via PTGDR. Secreted by epididymal epithelium, acts on immature sperm cells within the duct, modulating the degree of unsaturation of the fatty acyl components of phosphatidylcholines required for acrosome assembly and sperm cell motility. Facilitates the replacement of fatty acyl chains in phosphatidylcholines in sperm membranes from omega-6 and omega-9 to omega-3 polyunsaturated fatty acids (PUFAs). Coupled to lipoxygenase pathway, may process omega-6 PUFAs to generate oxygenated lipid mediators in the male reproductive tract. At pericentrosomal preciliary compartment, negatively regulates ciliogenesis likely by regulating endocytotic recycling of ciliary membrane protein. Coupled to cyclooxygenase pathway provides arachidonate to generate prostaglandin E2 (PGE2), a potent immunomodulatory lipid in inflammation and tumorigenesis. At colonic epithelial barrier, preferentially hydrolyzes phospholipids having arachidonate and docosahexaenoate at sn-2 position, contributing to the generation of oxygenated metabolites involved in colonic stem cell homeostasis. Releases C16:0 and C18:0 lysophosphatidylcholine subclasses from neuron plasma membranes and promotes neurite outgrowth and neuron survival. This Homo sapiens (Human) protein is Group 3 secretory phospholipase A2.